Here is a 103-residue protein sequence, read N- to C-terminus: Large ribosomal subunit protein uL24 (103 aa).

This sequence belongs to the universal ribosomal protein uL24 family. In terms of assembly, part of the 50S ribosomal subunit.

One of two assembly initiator proteins, it binds directly to the 5'-end of the 23S rRNA, where it nucleates assembly of the 50S subunit. Its function is as follows. One of the proteins that surrounds the polypeptide exit tunnel on the outside of the subunit. This Corynebacterium urealyticum (strain ATCC 43042 / DSM 7109) protein is Large ribosomal subunit protein uL24.